A 321-amino-acid chain; its full sequence is Peptide transport system permease protein SapB (321 aa).

Transmembrane regions (helical) follow at residues 8-28, 41-61, 82-102, 117-137, 150-170, 180-200, 249-269, and 289-309; these read HILWVALLLLVLSLLGFVILL, IYIGYFHYLGTLLQGDFGITY, CFITLFLAFIFGLPLGIISAV, YVGLSIPIFWLAPILLYVAAL, LLYEIKSITGFPVIDMWFMEV, ILQHLALPTLVLCILPTMEII, VFTLVLTQCMLVETALGWPGI, and VIVIGVCIILIDTFTKIFTFI. Positions 75–303 constitute an ABC transmembrane type-1 domain; sequence LPPTLELCFI…VCIILIDTFT (229 aa).

It belongs to the binding-protein-dependent transport system permease family. OppBC subfamily.

Its subcellular location is the cell inner membrane. In terms of biological role, involved in a peptide intake transport system that plays a role in the resistance to antimicrobial peptides. This chain is Peptide transport system permease protein SapB (sapB), found in Haemophilus influenzae (strain ATCC 51907 / DSM 11121 / KW20 / Rd).